Reading from the N-terminus, the 190-residue chain is RNA pyrophosphohydrolase (190 aa).

Positions 6-149 (GYRPNVGIVL…KRGVYARALC (144 aa)) constitute a Nudix hydrolase domain. The Nudix box signature appears at 38-59 (GGMHSDETPVEAMYRELNEEIG).

This sequence belongs to the Nudix hydrolase family. RppH subfamily. A divalent metal cation serves as cofactor.

Its function is as follows. Accelerates the degradation of transcripts by removing pyrophosphate from the 5'-end of triphosphorylated RNA, leading to a more labile monophosphorylated state that can stimulate subsequent ribonuclease cleavage. The polypeptide is RNA pyrophosphohydrolase (Xylella fastidiosa (strain M12)).